The following is a 642-amino-acid chain: Threonine--tRNA ligase (642 aa).

The TGS domain occupies methionine 1–threonine 61. The interval aspartate 243–proline 534 is catalytic. Cysteine 334, histidine 385, and histidine 511 together coordinate Zn(2+).

The protein belongs to the class-II aminoacyl-tRNA synthetase family. Homodimer. It depends on Zn(2+) as a cofactor.

Its subcellular location is the cytoplasm. It catalyses the reaction tRNA(Thr) + L-threonine + ATP = L-threonyl-tRNA(Thr) + AMP + diphosphate + H(+). Functionally, catalyzes the attachment of threonine to tRNA(Thr) in a two-step reaction: L-threonine is first activated by ATP to form Thr-AMP and then transferred to the acceptor end of tRNA(Thr). Also edits incorrectly charged L-seryl-tRNA(Thr). This Klebsiella pneumoniae (strain 342) protein is Threonine--tRNA ligase.